The following is a 608-amino-acid chain: Elongation factor 4 (608 aa).

Residues 11-193 form the tr-type G domain; sequence KKIRNFSIIA…QIVEKVPEPS (183 aa). Residues 23–28 and 140–143 contribute to the GTP site; these read DHGKST and NKID.

Belongs to the TRAFAC class translation factor GTPase superfamily. Classic translation factor GTPase family. LepA subfamily.

It is found in the cell membrane. The enzyme catalyses GTP + H2O = GDP + phosphate + H(+). In terms of biological role, required for accurate and efficient protein synthesis under certain stress conditions. May act as a fidelity factor of the translation reaction, by catalyzing a one-codon backward translocation of tRNAs on improperly translocated ribosomes. Back-translocation proceeds from a post-translocation (POST) complex to a pre-translocation (PRE) complex, thus giving elongation factor G a second chance to translocate the tRNAs correctly. Binds to ribosomes in a GTP-dependent manner. The protein is Elongation factor 4 of Listeria welshimeri serovar 6b (strain ATCC 35897 / DSM 20650 / CCUG 15529 / CIP 8149 / NCTC 11857 / SLCC 5334 / V8).